A 368-amino-acid polypeptide reads, in one-letter code: Abasic site processing protein YMR114C (368 aa).

Cys-2 acts as the Nucleophile in catalysis. Cys-2 carries the post-translational modification Thiazolidine linkage to a ring-opened DNA abasic site. A disordered region spans residues 25–48; that stretch reads VNTPKDASSNSQHPHDEEDTKDQP. Residues 37 to 46 show a composition bias toward basic and acidic residues; sequence HPHDEEDTKD. Glu-132 is an active-site residue. The segment at 270-368 is disordered; sequence LENDNEQGID…DSRGKKKIKK (99 aa). Basic and acidic residues-rich tracts occupy residues 281–296, 304–313, and 326–349; these read RGVK…DVFN, NSYDGLKKNE, and IGDR…EKRN. Position 338 is a phosphoserine (Ser-338).

This sequence belongs to the SOS response-associated peptidase family.

Its subcellular location is the chromosome. Formation and reversal of DNA-protein cross-link depends on DNA context. Catalyzes formation of the thiazolidine linkage in presence of abasic sites in single-stranded DNA. Mediates the reversal of the thiazolidine cross-link in presence of double stranded DNA. In terms of biological role, sensor of abasic sites in single-stranded DNA (ssDNA) required to preserve genome integrity by promoting error-free repair of abasic sites. Recognizes and binds abasic sites in ssDNA at replication forks and chemically modifies the lesion by forming a covalent cross-link with DNA: forms a stable thiazolidine linkage between a ring-opened abasic site and the alpha-amino and sulfhydryl substituents of its N-terminal catalytic cysteine residue. The DNA-protein cross-link is then reversed: able to catalyze the reversal of the thiazolidine cross-link and cycle between a cross-link and a non-cross-linked state depending on DNA context: mediates self-reversal of the thiazolidine cross-link in double stranded DNA. Acts as a protease: mediates autocatalytic processing of its N-terminal methionine in order to expose the catalytic cysteine. This is Abasic site processing protein YMR114C from Saccharomyces cerevisiae (strain ATCC 204508 / S288c) (Baker's yeast).